The sequence spans 487 residues: Protein translocase subunit SecY (487 aa).

The Cytoplasmic portion of the chain corresponds to 1-20 (MSWKDTAEPLLVRMPAVQRP). The helical transmembrane segment at 21 to 47 (EGHVPFKRKLTWTGGVLLLYFFLTNVK) threads the bilayer. Over 48–59 (LFGLDIDASQQV) the chain is Extracellular. An intramembrane region (helical) is located at residues 60–67 (FGRFSSIL). A discontinuously helical membrane pass occupies residues 60–88 (FGRFSSILASGQGSIMQLGIGPIVTASIV). An intramembrane segment occupies 68-79 (ASGQGSIMQLGI). An intramembrane region (helical) is located at residues 80–88 (GPIVTASIV). Residues 89–110 (LQLLGGADLLGLNTQDDPRDQI) are Cytoplasmic-facing. The chain crosses the membrane as a helical span at residues 111 to 135 (LYQGLQKLLVLVMICLTGLPMVFAG). The Extracellular portion of the chain corresponds to 136–153 (GFLPADTAVANSLGIGTA). A helical membrane pass occupies residues 154-178 (GVQWLIFAQMFVGGVLILFMDEVIS). The Cytoplasmic portion of the chain corresponds to 179 to 184 (KWGVGS). A helical membrane pass occupies residues 185–203 (GIGLFIVAGVSQRLVGGLL). Over 204–244 (TAPFLGNSEGIIYTWYLFITGERGTGPVLAADGLQTVLLQG) the chain is Extracellular. A helical membrane pass occupies residues 245–266 (ELLGLFTTVLIFAVVVYAESVR). The Cytoplasmic segment spans residues 267–291 (VEIPLSNARVKGARGRFPVKLIYAS). The chain crosses the membrane as a helical span at residues 292–313 (VLPMILVRALQANIQFLGRILN). Residues 314–364 (AQLGSMPAFLGTYANGQPTGGLFYFLAPIQSRGDWMWWLEGTAQPVWQILT) are Extracellular-facing. A helical membrane pass occupies residues 365–384 (RVGIDLFVMLVGGAVFAVFW). Topologically, residues 385-427 (VETTDMGPEATAKQIHNSGMQIPGFRQNVGVIEKVLERYIPQV) are cytoplasmic. Residues 428–446 (TVIGGALVGLLAVMANMLG) form a helical membrane-spanning segment. Residues 447–451 (TIGGV) are Extracellular-facing. A helical membrane pass occupies residues 452 to 466 (SGTGLLLTVSITYKL). Residues 467–487 (YEEIAEEQLMEMHPMMRQMFG) are Cytoplasmic-facing.

This sequence belongs to the SecY/SEC61-alpha family. As to quaternary structure, component of the Sec protein translocase complex. Heterotrimer consisting of alpha (SecY), beta (SecG) and gamma (SecE) subunits. The heterotrimers can form oligomers, although 1 heterotrimer is thought to be able to translocate proteins. Interacts with the ribosome. May interact with SecDF, and other proteins may be involved.

It is found in the cell membrane. In terms of biological role, the central subunit of the protein translocation channel SecYEG. Consists of two halves formed by TMs 1-5 and 6-10. These two domains form a lateral gate at the front which open onto the bilayer between TMs 2 and 7, and are clamped together by SecE at the back. The channel is closed by both a pore ring composed of hydrophobic SecY resides and a short helix (helix 2A) on the extracellular side of the membrane which forms a plug. The plug probably moves laterally to allow the channel to open. The ring and the pore may move independently. In Haloarcula marismortui (strain ATCC 43049 / DSM 3752 / JCM 8966 / VKM B-1809) (Halobacterium marismortui), this protein is Protein translocase subunit SecY.